We begin with the raw amino-acid sequence, 180 residues long: Large ribosomal subunit protein uL6 (180 aa).

The protein belongs to the universal ribosomal protein uL6 family. In terms of assembly, part of the 50S ribosomal subunit.

In terms of biological role, this protein binds to the 23S rRNA, and is important in its secondary structure. It is located near the subunit interface in the base of the L7/L12 stalk, and near the tRNA binding site of the peptidyltransferase center. This chain is Large ribosomal subunit protein uL6, found in Borrelia recurrentis (strain A1).